The primary structure comprises 73 residues: Conotoxin Vc6.17 (73 aa).

The first 19 residues, 1–19, serve as a signal peptide directing secretion; that stretch reads MQKLIILLLVAAVLMSTQA. The propeptide occupies 20–44; it reads LFQEKRRKEKIDLLSKRKTDAEKQH. Disulfide bonds link cysteine 48–cysteine 62, cysteine 55–cysteine 66, and cysteine 61–cysteine 71.

This sequence belongs to the conotoxin O2 superfamily. In terms of tissue distribution, expressed by the venom duct.

Its subcellular location is the secreted. Its function is as follows. Inhibits voltage-gated ion channels. The protein is Conotoxin Vc6.17 of Conus victoriae (Queen Victoria cone).